The chain runs to 187 residues: MTAYVRPALSLILLMTVVTGALYPLAVTGIAQVAFPKQANGSLVRDDRGEVRGSALIAQEFKGDGWFQSRPSAGAYATVASSASNLSPSNPALAERVKTDAAAQYQAQQGPVPQALLTTSGSGLDPHLPPEAIAYQLPRVAAARQVSEERLQVLVNDATLRPLIGPPVVNVLALNQALERLAPLAAR.

A helical transmembrane segment spans residues 11 to 31; it reads LILLMTVVTGALYPLAVTGIA.

The protein belongs to the KdpC family. In terms of assembly, the system is composed of three essential subunits: KdpA, KdpB and KdpC.

The protein localises to the cell inner membrane. Its function is as follows. Part of the high-affinity ATP-driven potassium transport (or Kdp) system, which catalyzes the hydrolysis of ATP coupled with the electrogenic transport of potassium into the cytoplasm. This subunit acts as a catalytic chaperone that increases the ATP-binding affinity of the ATP-hydrolyzing subunit KdpB by the formation of a transient KdpB/KdpC/ATP ternary complex. The sequence is that of Potassium-transporting ATPase KdpC subunit from Pseudomonas entomophila (strain L48).